We begin with the raw amino-acid sequence, 241 residues long: uncharacterized protein (241 aa).

The Cupin type-2 domain occupies 22 to 78 (SHKHAYSQFLFPLEGSIDLETEGRQVKLNPDHFLYIPPQCEHRFRSIGRNECLVLDV). The HTH araC/xylS-type domain maps to 137 to 235 (YASIAYIHSH…GMPPRLYRNT (99 aa)). 2 DNA-binding regions (H-T-H motif) span residues 154-175 (KKLA…KKQT) and 202-225 (LTVV…TKST).

This is an uncharacterized protein from Bacillus subtilis (strain 168).